The sequence spans 273 residues: UPF0380 protein YubP (273 aa).

Belongs to the UPF0380 family.

In Escherichia coli (strain K12), this protein is UPF0380 protein YubP (yubP).